Reading from the N-terminus, the 231-residue chain is 2-C-methyl-D-erythritol 4-phosphate cytidylyltransferase (231 aa).

It belongs to the IspD/TarI cytidylyltransferase family. IspD subfamily.

The catalysed reaction is 2-C-methyl-D-erythritol 4-phosphate + CTP + H(+) = 4-CDP-2-C-methyl-D-erythritol + diphosphate. The protein operates within isoprenoid biosynthesis; isopentenyl diphosphate biosynthesis via DXP pathway; isopentenyl diphosphate from 1-deoxy-D-xylulose 5-phosphate: step 2/6. Catalyzes the formation of 4-diphosphocytidyl-2-C-methyl-D-erythritol from CTP and 2-C-methyl-D-erythritol 4-phosphate (MEP). The sequence is that of 2-C-methyl-D-erythritol 4-phosphate cytidylyltransferase from Pseudoalteromonas atlantica (strain T6c / ATCC BAA-1087).